The following is a 184-amino-acid chain: Ribosome-recycling factor (184 aa).

This sequence belongs to the RRF family.

Its subcellular location is the cytoplasm. Responsible for the release of ribosomes from messenger RNA at the termination of protein biosynthesis. May increase the efficiency of translation by recycling ribosomes from one round of translation to another. This is Ribosome-recycling factor from Aquifex aeolicus (strain VF5).